A 624-amino-acid polypeptide reads, in one-letter code: Chaperone protein HtpG (624 aa).

The segment at 1 to 336 is a; substrate-binding; it reads MKGQETRGFQ…SNDLPLNVSR (336 aa). The interval 337-552 is b; sequence EILQDSTVTR…ADEMSTQMAK (216 aa). The interval 553 to 624 is c; sequence LFAAAGQSVP…IRRMNQLLVS (72 aa).

It belongs to the heat shock protein 90 family. In terms of assembly, homodimer. UMPylated on a histidine residue by YdiU under ATP-limited conditions.

It is found in the cytoplasm. UMPylation of the chaperone by YdiU negatively regulates its activity, facilitating Salmonella survival under ATP-limited conditions. Its function is as follows. Molecular chaperone. Has ATPase activity. This Salmonella typhimurium (strain LT2 / SGSC1412 / ATCC 700720) protein is Chaperone protein HtpG.